Here is a 381-residue protein sequence, read N- to C-terminus: Translation initiation factor eIF2B subunit beta (381 aa).

A disordered region spans residues 125 to 148; sequence LQKPEQPHQNRKNSSGSSSMKTKT. Over residues 136–145 the composition is skewed to polar residues; sequence KNSSGSSSMK.

The protein belongs to the eIF-2B alpha/beta/delta subunits family. As to quaternary structure, component of the translation initiation factor 2B (eIF2B) complex which is a heterodecamer of two sets of five different subunits: alpha, beta, gamma, delta and epsilon. Subunits alpha, beta and delta comprise a regulatory subcomplex and subunits epsilon and gamma comprise a catalytic subcomplex. Within the complex, the hexameric regulatory complex resides at the center, with the two heterodimeric catalytic subcomplexes bound on opposite sides.

It is found in the cytoplasm. The protein localises to the cytosol. Acts as a component of the translation initiation factor 2B (eIF2B) complex, which catalyzes the exchange of GDP for GTP on the eukaryotic initiation factor 2 (eIF2) complex gamma subunit. Its guanine nucleotide exchange factor activity is repressed when bound to eIF2 complex phosphorylated on the alpha subunit, thereby limiting the amount of methionyl-initiator methionine tRNA available to the ribosome and consequently global translation is repressed. It activates the synthesis of GCN4 in yeast under amino acid starvation conditions by suppressing the inhibitory effects of multiple AUG codons present in the leader of GCN4 mRNA. It may promote either repression or activation of GCN4 expression depending on amino acid availability. GCD6 and GCD7 repress GCN4 expression at the translational level by ensuring that ribosomes which have translated UORF1 will reinitiate at UORF2, -3, or -4 and thus fail to reach the GCN4 start site. The sequence is that of Translation initiation factor eIF2B subunit beta (GCD7) from Saccharomyces cerevisiae (strain ATCC 204508 / S288c) (Baker's yeast).